A 177-amino-acid chain; its full sequence is Large ribosomal subunit protein uL6 (177 aa).

This sequence belongs to the universal ribosomal protein uL6 family. In terms of assembly, part of the 50S ribosomal subunit.

Functionally, this protein binds to the 23S rRNA, and is important in its secondary structure. It is located near the subunit interface in the base of the L7/L12 stalk, and near the tRNA binding site of the peptidyltransferase center. The polypeptide is Large ribosomal subunit protein uL6 (Nitrobacter winogradskyi (strain ATCC 25391 / DSM 10237 / CIP 104748 / NCIMB 11846 / Nb-255)).